Consider the following 304-residue polypeptide: Ribonuclease Z (304 aa).

Zn(2+)-binding residues include histidine 61, histidine 63, aspartate 65, histidine 66, histidine 138, aspartate 206, and histidine 265. Aspartate 65 serves as the catalytic Proton acceptor.

Belongs to the RNase Z family. In terms of assembly, homodimer. Zn(2+) serves as cofactor.

The catalysed reaction is Endonucleolytic cleavage of RNA, removing extra 3' nucleotides from tRNA precursor, generating 3' termini of tRNAs. A 3'-hydroxy group is left at the tRNA terminus and a 5'-phosphoryl group is left at the trailer molecule.. Zinc phosphodiesterase, which displays some tRNA 3'-processing endonuclease activity. Probably involved in tRNA maturation, by removing a 3'-trailer from precursor tRNA. In Lachnoclostridium phytofermentans (strain ATCC 700394 / DSM 18823 / ISDg) (Clostridium phytofermentans), this protein is Ribonuclease Z.